Here is a 106-residue protein sequence, read N- to C-terminus: UPF0060 membrane protein Smed_0659 (106 aa).

The next 3 helical transmembrane spans lie at 4–24, 31–51, and 61–81; these read FAIYFLAALAEIAGCFTFWAW, GLWLLPGMASLAIFAWLLTMV, and AAYGGIYIIASLCWLWVAEGA.

It belongs to the UPF0060 family.

It localises to the cell inner membrane. The chain is UPF0060 membrane protein Smed_0659 from Sinorhizobium medicae (strain WSM419) (Ensifer medicae).